The sequence spans 341 residues: MQSQNTPAAGRYPAGGLAFPHRDLTGIGQLARHEILYLLDEAEQWVELNRQSQKTTDLLNGLTIINAFFENSTRTLLSFEIAGKRLGADVVNMHAATSSVKKGETLIDTAMTLNAMRADAIVIRHASSGAVRLIAEKVDCPVLNAGDGQHEHPTQALLDALTMRHAMKLPAGSDLNGLKVTICGDILHSRVARSNILSLTALGAEVRVCAPPALMPAEIEAMGVTPFHDFDAALKGANIVMMLRLQQERMSGQFIPSPREYRHLYGLTPERLARAEADAFVMHPGPMNRGIEIDSTVADHPTRSLITRQVEMGVAIRMACLEVLTRRARRTPGWEAEGASA.

2 residues coordinate carbamoyl phosphate: Arg-74 and Thr-75. Lys-102 provides a ligand contact to L-aspartate. 3 residues coordinate carbamoyl phosphate: Arg-124, His-152, and Gln-155. 2 residues coordinate L-aspartate: Arg-190 and Arg-244. Carbamoyl phosphate-binding residues include Gly-285 and Pro-286.

It belongs to the aspartate/ornithine carbamoyltransferase superfamily. ATCase family. In terms of assembly, heterododecamer (2C3:3R2) of six catalytic PyrB chains organized as two trimers (C3), and six regulatory PyrI chains organized as three dimers (R2).

The enzyme catalyses carbamoyl phosphate + L-aspartate = N-carbamoyl-L-aspartate + phosphate + H(+). Its pathway is pyrimidine metabolism; UMP biosynthesis via de novo pathway; (S)-dihydroorotate from bicarbonate: step 2/3. Its function is as follows. Catalyzes the condensation of carbamoyl phosphate and aspartate to form carbamoyl aspartate and inorganic phosphate, the committed step in the de novo pyrimidine nucleotide biosynthesis pathway. This is Aspartate carbamoyltransferase catalytic subunit from Novosphingobium aromaticivorans (strain ATCC 700278 / DSM 12444 / CCUG 56034 / CIP 105152 / NBRC 16084 / F199).